Here is a 363-residue protein sequence, read N- to C-terminus: Alanine racemase (363 aa).

Lys34 acts as the Proton acceptor; specific for D-alanine in catalysis. Position 34 is an N6-(pyridoxal phosphate)lysine (Lys34). A substrate-binding site is contributed by Arg129. Tyr256 (proton acceptor; specific for L-alanine) is an active-site residue. Residue Met304 participates in substrate binding.

Belongs to the alanine racemase family. Requires pyridoxal 5'-phosphate as cofactor.

The enzyme catalyses L-alanine = D-alanine. The protein operates within amino-acid biosynthesis; D-alanine biosynthesis; D-alanine from L-alanine: step 1/1. Its function is as follows. Catalyzes the interconversion of L-alanine and D-alanine. May also act on other amino acids. The chain is Alanine racemase (alr) from Edwardsiella ictaluri (strain 93-146).